The following is a 468-amino-acid chain: UDP-glucosyl transferase 74CD1 (468 aa).

G20 provides a ligand contact to UDP-alpha-D-glucose. Catalysis depends on H21, which acts as the Proton acceptor. D114 functions as the Charge relay in the catalytic mechanism. Residues S292, W344, Q347, H362, W365, N366, S367, E370, D386, and Q387 each coordinate UDP-alpha-D-glucose.

The protein belongs to the UDP-glycosyltransferase family. Mainly expressed in flowers, flower buds and young leaves, and, to a lesser extent, in old leaves, stems and roots.

Its pathway is secondary metabolite biosynthesis; terpenoid biosynthesis. Component of the oleanane-type triterpene saponins (e.g. saponarioside A and saponarioside B) biosynthetic pathway, leading to the production of natural products with detergent properties used as traditional sources of soap. A glycosyltransferase that, together with SDR1, mediates the conversion of QA-tri to QA-triF; UGT74CD1 may transfer 4-keto-6-deoxy-glucose to QA-tri, which is in turn reduced to D-fucose by SDR1, thus leading to QA-triF formation via the initiation of the C-28 sugar chain. The sequence is that of UDP-glucosyl transferase 74CD1 from Saponaria officinalis (Common soapwort).